Here is a 71-residue protein sequence, read N- to C-terminus: Arrestin-D (71 aa).

It belongs to the arrestin family. As to expression, adrenal, cerebral cortex, heart, liver, lung, pituitary and testis.

This chain is Arrestin-D (Dar), found in Rattus norvegicus (Rat).